Consider the following 270-residue polypeptide: 23S rRNA (adenosine(1067)-2'-O)-methyltransferase (270 aa).

Residues arginine 135, arginine 165, glycine 218, isoleucine 238, and leucine 247 each coordinate S-adenosyl-L-methionine.

This sequence belongs to the class IV-like SAM-binding methyltransferase superfamily. RNA methyltransferase TsnR/AvirB family.

It carries out the reaction adenosine(1067) in 23S rRNA + S-adenosyl-L-methionine = 2'-O-methyladenosine(1067) in 23S rRNA + S-adenosyl-L-homocysteine + H(+). Specifically methylates the adenosine-1067 in 23S ribosomal RNA. Confers resistance to antibiotic thiostrepton. The chain is 23S rRNA (adenosine(1067)-2'-O)-methyltransferase from Streptomyces laurentii.